The sequence spans 412 residues: Thyroxine-binding globulin (412 aa).

An N-terminal signal peptide occupies residues 1 to 16; the sequence is MPLFFSLVLLILGLHC. N-linked (GlcNAc...) asparagine glycans are attached at residues N35, N98, N164, and N252. Residues N292 and K395 each contribute to the thyroxine site.

Belongs to the serpin family. Expressed by the liver and secreted in plasma.

It localises to the secreted. Major thyroid hormone transport protein in serum. The polypeptide is Thyroxine-binding globulin (SERPINA7) (Ovis aries (Sheep)).